The primary structure comprises 174 residues: N-terminal acetyltransferase B complex catalytic subunit NAA20 (174 aa).

The 150-residue stretch at 2–151 folds into the N-acetyltransferase domain; it reads TTIRRFSCND…DGLDMRKALS (150 aa).

This sequence belongs to the acetyltransferase family. ARD1 subfamily.

It carries out the reaction N-terminal L-methionyl-L-asparaginyl-[protein] + acetyl-CoA = N-terminal N(alpha)-acetyl-L-methionyl-L-asparaginyl-[protein] + CoA + H(+). The enzyme catalyses N-terminal L-methionyl-L-glutaminyl-[protein] + acetyl-CoA = N-terminal N(alpha)-acetyl-L-methionyl-L-glutaminyl-[protein] + CoA + H(+). It catalyses the reaction N-terminal L-methionyl-L-aspartyl-[protein] + acetyl-CoA = N-terminal N(alpha)-acetyl-L-methionyl-L-aspartyl-[protein] + CoA + H(+). The catalysed reaction is N-terminal L-methionyl-L-glutamyl-[protein] + acetyl-CoA = N-terminal N(alpha)-acetyl-L-methionyl-L-glutamyl-[protein] + CoA + H(+). Its function is as follows. Catalytic subunit of the NatB N-alpha-acetyltransferase complex. Involved in plant immunity through the regulation of SNC1 stability. This Arabidopsis thaliana (Mouse-ear cress) protein is N-terminal acetyltransferase B complex catalytic subunit NAA20.